We begin with the raw amino-acid sequence, 690 residues long: Elongation factor G (690 aa).

The tr-type G domain maps to 8–283 (EYIRNIGICA…AVVGFLPSPI (276 aa)). Residues 17–24 (AHIDAGKT), 81–85 (DTPGH), and 135–138 (NKMD) contribute to the GTP site.

It belongs to the TRAFAC class translation factor GTPase superfamily. Classic translation factor GTPase family. EF-G/EF-2 subfamily.

It is found in the cytoplasm. Its function is as follows. Catalyzes the GTP-dependent ribosomal translocation step during translation elongation. During this step, the ribosome changes from the pre-translocational (PRE) to the post-translocational (POST) state as the newly formed A-site-bound peptidyl-tRNA and P-site-bound deacylated tRNA move to the P and E sites, respectively. Catalyzes the coordinated movement of the two tRNA molecules, the mRNA and conformational changes in the ribosome. The sequence is that of Elongation factor G from Rickettsia canadensis (strain McKiel).